We begin with the raw amino-acid sequence, 1087 residues long: Ubiquitin-associated protein 2-like (1087 aa).

Methionine 1 bears the N-acetylmethionine mark. Residues 1 to 33 (MMTSVGTNRARGNWEQPQNQNQTQHKQRPQATA) form a disordered region. A UBA domain is found at 49–89 (DFEEKVKQLIDITGKNQDECVIALHDCNGDVNRAINVLLEG). Residues 92–234 (DTHSWEMVGK…TGHFEPDDGT (143 aa)) are disordered. Residues 118-132 (EEGKENRDRDRDYSR) show a composition bias toward basic and acidic residues. Over residues 133–145 (RRGGPPRRGRGAS) the composition is skewed to basic residues. Arginine 187 and arginine 190 each carry asymmetric dimethylarginine. A compositionally biased stretch (low complexity) spans 213–226 (NYGNSSGNTWNNTG). Phosphoserine occurs at positions 356 and 360. Residues 377 to 389 (AQHSQSGSTTTSS) show a composition bias toward low complexity. The disordered stretch occupies residues 377 to 420 (AQHSQSGSTTTSSWDMGSTTQSPSLVQYDLKNPSDSAVHSPFTK). Residues 390–401 (WDMGSTTQSPSL) show a composition bias toward polar residues. A phosphoserine mark is found at serine 410 and serine 416. Threonine 425 carries the phosphothreonine modification. Phosphoserine occurs at positions 439, 454, 467, 470, 471, and 477. Disordered regions lie at residues 440 to 493 (PAVA…KKAS), 530 to 656 (SDYE…IPPL), and 669 to 794 (TNQH…LPPG). Composition is skewed to low complexity over residues 474-485 (QSSSPQPAQQKL) and 534-569 (STPT…SQES). Over residues 570 to 656 (GYQSGPIQST…SPSTSSIPPL (87 aa)) the composition is skewed to polar residues. Serine 604, serine 605, serine 608, and serine 609 each carry phosphoserine. Residues 688 to 784 (TTTTQHSSTL…STRSSVATTS (97 aa)) show a composition bias toward low complexity. Phosphoserine is present on residues serine 852 and serine 859. The tract at residues 865 to 901 (FGRGDASSPAPATTLAQPQQNQTQTHHTTQQTFLNPA) is disordered. Positions 873–896 (PAPATTLAQPQQNQTQTHHTTQQT) are enriched in low complexity. Omega-N-methylarginine occurs at positions 962 and 969. 2 positions are modified to N6-acetyllysine: valine 969 and threonine 976. A disordered region spans residues 1040 to 1087 (QQPHSQILHHHLQQDGQTGSGQRSQTSSIPQKPQTNKSAYNSYSWGAN). Over residues 1053 to 1067 (QDGQTGSGQRSQTSS) the composition is skewed to low complexity. Positions 1068–1087 (IPQKPQTNKSAYNSYSWGAN) are enriched in polar residues.

As to quaternary structure, interacts with BMI1. Part of a complex consisting of UBAP2L, BMI1 and RNF2. Interacts with G3BP1 (via NTF2 domain); promoting stress granule formation. In terms of processing, acetylated. Ubiquitous.

It localises to the nucleus. The protein localises to the chromosome. The protein resides in the cytoplasm. Its subcellular location is the stress granule. Recruits the ubiquitination machinery to RNA polymerase II for polyubiquitination, removal and degradation, when the transcription-coupled nucleotide excision repair (TC-NER) machinery fails to resolve DNA damage. Plays an important role in the activity of long-term repopulating hematopoietic stem cells (LT-HSCs). Is a regulator of stress granule assembly, required for their efficient formation. Required for proper brain development and neocortex lamination. This is Ubiquitin-associated protein 2-like from Homo sapiens (Human).